Consider the following 800-residue polypeptide: Mitogen-activated protein kinase kinase kinase 20 (800 aa).

N-acetylserine is present on serine 2. Phosphoserine; by autocatalysis is present on residues serine 2, serine 3, and serine 7. The Protein kinase domain occupies 16-277 (LQFFENCGGG…SLPDKCNSFL (262 aa)). Residues 22 to 30 (CGGGSFGSV) and lysine 45 each bind ATP. The active-site Proton acceptor is the aspartate 133. At threonine 161 the chain carries Phosphothreonine; by autocatalysis. The residue at position 165 (serine 165) is a Phosphoserine; by autocatalysis. Serine 275 bears the Phosphoserine mark. The leucine-zipper stretch occupies residues 287 to 308 (IEATLERLKKLERDLSFKEQEL). Serine 302 bears the Phosphoserine; by autocatalysis mark. Residues tryptophan 339, glutamate 429, lysine 434, aspartate 454, and serine 567 each carry the phosphoserine modification. An SAM domain is found at 339-410 (WTEDDVYCWV…KSAIEKLTHD (72 aa)). Threonine 586 carries the post-translational modification Phosphothreonine; by autocatalysis. Position 587 is a phosphoserine; by autocatalysis (serine 587). Phosphoserine occurs at positions 593 and 599. Threonine 628 bears the Phosphothreonine mark. 3 positions are modified to phosphoserine: serine 633, serine 637, and serine 648. Residues serine 649 and serine 660 each carry the phosphoserine; by autocatalysis modification. Positions 652-666 (LNSRDSGFSSGNTDT) are enriched in polar residues. The disordered stretch occupies residues 652-800 (LNSRDSGFSS…RGDHRGWRNF (149 aa)). Threonine 664 bears the Phosphothreonine; by autocatalysis mark. The span at 667-678 (SSERGRYSDRSR) shows a compositional bias: basic and acidic residues. The sensing domain (S) stretch occupies residues 670-713 (RGRYSDRSRNKYGRGSISLNSSPRGRYSGKSQHSTPSRGRYPGK). Serine 685 is modified (phosphoserine). Polar residues-rich tracts occupy residues 686–706 (ISLNSSPRGRYSGKSQHSTPS) and 717–726 (VSQSALNPHQ). Serine 718 and serine 720 each carry phosphoserine; by autocatalysis. Phosphoserine occurs at positions 727 and 733. Positions 728–738 (PDFKRSPRDLH) are enriched in basic and acidic residues. Threonine 742 bears the Phosphothreonine; by autocatalysis mark. Basic and acidic residues-rich tracts occupy residues 750 to 763 (PETDSRASEEDSKV) and 785 to 800 (TNKERARGDHRGWRNF). The segment at 774 to 800 (RKKPHRPSPAKTNKERARGDHRGWRNF) is C-terminal domain (CTD).

This sequence belongs to the protein kinase superfamily. STE Ser/Thr protein kinase family. MAP kinase kinase kinase subfamily. Homodimer. Interacts with ZNF33A. Component of a signaling complex containing at least AKAP13, PKN1, MAPK14, MAP3K20 and MAP2K3. Within this complex, AKAP13 interacts directly with PKN1, which in turn recruits MAPK14, MAP2K3 and MAP3K20. Interacts with EIF2AK4/GCN2; promoting EIF2AK4/GCN2 kinase activity. In terms of assembly, interacts with isoform ZAKbeta. As to quaternary structure, interacts with isoform ZAKalpha. The cofactor is Mg(2+). Activated by phosphorylation by PKN1, followed by autophosphorylation on Thr-161 and Ser-165. Autophosphorylation in response to ribotoxic stress promotes dissociation from colliding ribosomes and activation. As to expression, ubiquitously expressed. Isoform ZAKbeta is the predominant form in all tissues examined, except for liver, in which isoform ZAKalpha is more highly expressed.

Its subcellular location is the cytoplasm. It is found in the nucleus. The enzyme catalyses L-seryl-[protein] + ATP = O-phospho-L-seryl-[protein] + ADP + H(+). The catalysed reaction is L-threonyl-[protein] + ATP = O-phospho-L-threonyl-[protein] + ADP + H(+). Activated in response to stress, such as ribosomal stress, osmotic shock and ionizing radiation. Activated by phosphorylation by PKN1, followed by autophosphorylation on Thr-161 and Ser-165. Inhibited by nilotinib, sorafenib, dabrafenib, rebastinib and vemurafenib. Selectively inhibited by N-(3)-((1H-Pyrazolo[3,4-b]pyridin-5-yl)ethynyl)benzenesulfonamide compound 3h. Selectively inhibited by 1,2,3-triazole benzenesulfonamides. Stress-activated component of a protein kinase signal transduction cascade that promotes programmed cell death in response to various stress, such as ribosomal stress, osmotic shock and ionizing radiation. Acts by catalyzing phosphorylation of MAP kinase kinases, leading to activation of the JNK (MAPK8/JNK1, MAPK9/JNK2 and/or MAPK10/JNK3) and MAP kinase p38 (MAPK11, MAPK12, MAPK13 and/or MAPK14) pathways. Activates JNK through phosphorylation of MAP2K4/MKK4 and MAP2K7/MKK7, and MAP kinase p38 gamma (MAPK12) via phosphorylation of MAP2K3/MKK3 and MAP2K6/MKK6. Involved in stress associated with adrenergic stimulation: contributes to cardiac decompensation during periods of acute cardiac stress. May be involved in regulation of S and G2 cell cycle checkpoint by mediating phosphorylation of CHEK2. Its function is as follows. Key component of the stress-activated protein kinase signaling cascade in response to ribotoxic stress or UV-B irradiation. Acts as the proximal sensor of ribosome collisions during the ribotoxic stress response (RSR): directly binds to the ribosome by inserting its flexible C-terminus into the ribosomal intersubunit space, thereby acting as a sentinel for colliding ribosomes. Upon ribosome collisions, activates either the stress-activated protein kinase signal transduction cascade or the integrated stress response (ISR), leading to programmed cell death or cell survival, respectively. Dangerous levels of ribosome collisions trigger the autophosphorylation and activation of MAP3K20, which dissociates from colliding ribosomes and phosphorylates MAP kinase kinases, leading to activation of the JNK and MAP kinase p38 pathways that promote programmed cell death. Less dangerous levels of ribosome collisions trigger the integrated stress response (ISR): MAP3K20 activates EIF2AK4/GCN2 independently of its protein-kinase activity, promoting EIF2AK4/GCN2-mediated phosphorylation of EIF2S1/eIF-2-alpha. Also part of the stress-activated protein kinase signaling cascade triggering the NLRP1 inflammasome in response to UV-B irradiation: ribosome collisions activate MAP3K20, which directly phosphorylates NLRP1, leading to activation of the NLRP1 inflammasome and subsequent pyroptosis. NLRP1 is also phosphorylated by MAP kinase p38 downstream of MAP3K20. Also acts as a histone kinase by phosphorylating histone H3 at 'Ser-28' (H3S28ph). In terms of biological role, isoform that lacks the C-terminal region that mediates ribosome-binding: does not act as a sensor of ribosome collisions in response to ribotoxic stress. May act as an antagonist of isoform ZAKalpha: interacts with isoform ZAKalpha, leading to decrease the expression of isoform ZAKalpha. This chain is Mitogen-activated protein kinase kinase kinase 20, found in Homo sapiens (Human).